We begin with the raw amino-acid sequence, 100 residues long: Bombyxin A-2 homolog (100 aa).

The signal sequence occupies residues 1-18 (MRTQVLFLIVVLAVMASG). Disulfide bonds link Cys-26–Cys-85, Cys-38–Cys-98, and Cys-84–Cys-89. Residues 47 to 75 (PPYISSENEGYGWKWLERQRARQLDEARG) constitute a propeptide, c peptide like.

This sequence belongs to the insulin family. As to quaternary structure, heterodimer of a B chain and an A chain linked by two disulfide bonds.

The protein localises to the secreted. Brain peptide responsible for activation of prothoracic glands to produce ecdysone in insects. This Samia cynthia (Ailanthus silkmoth) protein is Bombyxin A-2 homolog (SBXA2).